A 196-amino-acid polypeptide reads, in one-letter code: GTP cyclohydrolase-2 (196 aa).

Residue Arg-49–Glu-53 participates in GTP binding. Cys-54, Cys-65, and Cys-67 together coordinate Zn(2+). GTP is bound by residues Gln-70, Glu-92–Arg-94, and Thr-114. Asp-126 (proton acceptor) is an active-site residue. Arg-128 functions as the Nucleophile in the catalytic mechanism. Positions 149 and 154 each coordinate GTP.

It belongs to the GTP cyclohydrolase II family. Homodimer. Zn(2+) is required as a cofactor.

It carries out the reaction GTP + 4 H2O = 2,5-diamino-6-hydroxy-4-(5-phosphoribosylamino)-pyrimidine + formate + 2 phosphate + 3 H(+). It participates in cofactor biosynthesis; riboflavin biosynthesis; 5-amino-6-(D-ribitylamino)uracil from GTP: step 1/4. Functionally, catalyzes the conversion of GTP to 2,5-diamino-6-ribosylamino-4(3H)-pyrimidinone 5'-phosphate (DARP), formate and pyrophosphate. This Enterobacter sp. (strain 638) protein is GTP cyclohydrolase-2.